Here is a 1690-residue protein sequence, read N- to C-terminus: Restin homolog (1690 aa).

2 stretches are compositionally biased toward polar residues: residues 1-11 (MSDDTSASGGT) and 39-51 (NIPT…TGIP). The segment at 1–105 (MSDDTSASGG…ESDDNLSSIN (105 aa)) is disordered. A phosphoserine mark is found at Ser-64 and Ser-67. The region spanning 143–185 (GDTHFAAGEWAGVVLDEPNGKNDGCVSGKRYFQCEPKRGIFSR) is the CAP-Gly 1 domain. The tract at residues 195-227 (AGAQTPTSPLAKSSPDRSRTVSPTASIRSSMLR) is disordered. A compositionally biased stretch (polar residues) spans 214–226 (TVSPTASIRSSML). Ser-216 is subject to Phosphoserine. Residues 260–302 (GETQFAPGNWCGVELDEPSGKNDGTVDDIRYFECKPKYGVFVP) form the CAP-Gly 2 domain. Phosphoserine is present on residues Ser-309, Ser-322, and Ser-325. A Phosphothreonine modification is found at Thr-327. The residue at position 328 (Ser-328) is a Phosphoserine. Position 362 is a phosphothreonine (Thr-362). 7 coiled-coil regions span residues 378–468 (QHVE…VSAT), 484–660 (GALQ…DMLR), 667–916 (EEKS…TKLK), 926–981 (LSSC…ELQA), 1001–1121 (ATGH…EAIQ), 1158–1549 (EADM…AQMN), and 1565–1600 (DIET…LETL). Residues 843 to 905 (QQAAASGEEG…GSLEEEAKKS (63 aa)) are disordered. Polar residues predominate over residues 865–885 (QLKSQAEETQSELKSTQSNLE). 2 disordered regions span residues 1031-1052 (QLQD…KEKS) and 1400-1419 (KLDE…NEIQ). Composition is skewed to basic and acidic residues over residues 1040 to 1052 (TKLK…KEKS) and 1410 to 1419 (SQKKSHNEIQ). Residues 1635 to 1665 (TEDCPIQGSEDQDYSTPSSESNNNEKERKLP) form a disordered region. Phosphothreonine is present on Thr-1681. Ser-1682 is modified (phosphoserine).

In terms of assembly, interacts with Lva. In terms of tissue distribution, specifically expressed at the tip of the furrow in cellularizing blastoderms. CLIP-190 and jar are coexpressed at several times in development and in a number of tissues, including embryonic axonal neuron processes and posterior pole.

The protein localises to the cytoplasm. It is found in the cytoskeleton. Its subcellular location is the golgi apparatus. It localises to the microtubule organizing center. The protein resides in the perinuclear region. Its function is as follows. Together CLIP-190 and jar may coordinate the interaction between the actin and microtubule cytoskeleton. May link endocytic vesicles to microtubules. May play a role in formation of furrows during cellularization. The chain is Restin homolog (CLIP-190) from Drosophila melanogaster (Fruit fly).